We begin with the raw amino-acid sequence, 626 residues long: Chaperone protein HtpG (626 aa).

Residues 1–339 are a; substrate-binding; it reads MSTNQETRGF…SNDLPLNVSR (339 aa). The b stretch occupies residues 340 to 555; it reads EILQDNKVTA…NDQMTTQMAK (216 aa). The c stretch occupies residues 556–626; the sequence is LFAAAGQPVP…FIKRVNSLLS (71 aa).

It belongs to the heat shock protein 90 family. Homodimer.

Its subcellular location is the cytoplasm. Molecular chaperone. Has ATPase activity. This Histophilus somni (strain 129Pt) (Haemophilus somnus) protein is Chaperone protein HtpG.